Reading from the N-terminus, the 394-residue chain is Anthocyanidin 3-O-glucosyltransferase 6 (394 aa).

D37 acts as the Charge relay in catalysis. UDP-alpha-D-glucose contacts are provided by T59, A267, Q269, H284, W287, N288, S289, and E292. An anthocyanidin is bound at residue A307. UDP-alpha-D-glucose is bound by residues E308 and Q309.

It belongs to the UDP-glycosyltransferase family. Expressed in cotyledons and leaves.

It catalyses the reaction an anthocyanidin + UDP-alpha-D-glucose + H(+) = an anthocyanidin 3-O-beta-D-glucoside + UDP. The protein operates within pigment biosynthesis; anthocyanin biosynthesis. Its function is as follows. In the presence of other necessary color factors, this glycosylation reaction allows the accumulation of anthocyanin pigments. May be involved in glycosylation of unstable cyanohydrins to produce stable cyanoglucosides. This chain is Anthocyanidin 3-O-glucosyltransferase 6 (GT6), found in Manihot esculenta (Cassava).